Consider the following 615-residue polypeptide: ABC transporter G family member 22 (615 aa).

Positions 31 to 279 (ITFKDLAYSV…EIGFPFPDQT (249 aa)) constitute an ABC transporter domain. An ATP-binding site is contributed by 67–74 (GPSGSGKT). The ABC transmembrane type-2 domain occupies 364–610 (SNCLVRFAVA…TMVFLCLHYF (247 aa)). Transmembrane regions (helical) follow at residues 370 to 390 (FAVA…LGMD), 400 to 420 (VLFY…SLFI), 442 to 462 (LALM…LGTI), 477 to 497 (FFAM…MLII), 508 to 528 (FAVG…FVPI), and 587 to 607 (INLI…FLCL).

The protein belongs to the ABC transporter superfamily. ABCG family. Eye pigment precursor importer (TC 3.A.1.204) subfamily.

The protein localises to the membrane. In terms of biological role, may be involved in cell migration. This chain is ABC transporter G family member 22 (abcG22), found in Dictyostelium discoideum (Social amoeba).